The chain runs to 350 residues: Phosphatidylinositol transfer protein PDR17 (350 aa).

The region spanning 139–297 (KVAVENETGK…LYNGLLDFKY (159 aa)) is the CRAL-TRIO domain.

In terms of assembly, interacts with phosphatidylserine decarboxylase PSD2. Also interacts with PBI1.

It is found in the cytoplasm. Its subcellular location is the microsome. It carries out the reaction a 1,2-diacyl-sn-glycero-3-phospho-(1D-myo-inositol)(in) = a 1,2-diacyl-sn-glycero-3-phospho-(1D-myo-inositol)(out). Has phosphatidylinositol transfer activity. Involved in the regulation of the phospholipid composition of plasma- and endomembranes. Altering plasma membrane composition may provide a possible mechanism for multidrug resistance. Contributes to efficient phospholipase D1 activation and phospholipase B1 inhibition in the regulation of phospholipid turnover. Forms a complex with phosphatidylserine decarboxylase PSD2 that seems essential for maintenance of vacuolar phosphatidylethanolamine (PE) levels. Allows interorganelle phosphatidylserine (PtdSer) transport via a process that involves the acceptor membrane complex PDR17-PDS2 that binds to PBI1 which in turn ligates to SCS2 and phosphatidic acid present in the donor membrane, forming a zone of apposition that facilitates PtdSer transfer. This chain is Phosphatidylinositol transfer protein PDR17, found in Saccharomyces cerevisiae (strain ATCC 204508 / S288c) (Baker's yeast).